The sequence spans 269 residues: Phosphonoacetaldehyde hydrolase (269 aa).

Catalysis depends on aspartate 9, which acts as the Nucleophile. Mg(2+) is bound by residues aspartate 9 and alanine 11. Lysine 50 serves as the catalytic Schiff-base intermediate with substrate. Aspartate 184 is a binding site for Mg(2+).

Belongs to the HAD-like hydrolase superfamily. PhnX family. In terms of assembly, homodimer. The cofactor is Mg(2+).

The catalysed reaction is phosphonoacetaldehyde + H2O = acetaldehyde + phosphate + H(+). Involved in phosphonate degradation. This chain is Phosphonoacetaldehyde hydrolase, found in Lysinibacillus sphaericus (strain C3-41).